We begin with the raw amino-acid sequence, 475 residues long: Ribulose bisphosphate carboxylase large chain (475 aa).

The propeptide occupies 1 to 2 (MS). Pro-3 carries the N-acetylproline modification. Lys-14 carries the N6,N6,N6-trimethyllysine modification. Residues Asn-123 and Thr-173 each coordinate substrate. Lys-175 functions as the Proton acceptor in the catalytic mechanism. Position 177 (Lys-177) interacts with substrate. Mg(2+) contacts are provided by Lys-201, Asp-203, and Glu-204. Lys-201 carries the post-translational modification N6-carboxylysine. The Proton acceptor role is filled by His-294. Positions 295, 327, and 379 each coordinate substrate.

This sequence belongs to the RuBisCO large chain family. Type I subfamily. Heterohexadecamer of 8 large chains and 8 small chains; disulfide-linked. The disulfide link is formed within the large subunit homodimers. Mg(2+) is required as a cofactor. Post-translationally, the disulfide bond which can form in the large chain dimeric partners within the hexadecamer appears to be associated with oxidative stress and protein turnover.

It localises to the plastid. Its subcellular location is the chloroplast. It carries out the reaction 2 (2R)-3-phosphoglycerate + 2 H(+) = D-ribulose 1,5-bisphosphate + CO2 + H2O. The enzyme catalyses D-ribulose 1,5-bisphosphate + O2 = 2-phosphoglycolate + (2R)-3-phosphoglycerate + 2 H(+). Its function is as follows. RuBisCO catalyzes two reactions: the carboxylation of D-ribulose 1,5-bisphosphate, the primary event in carbon dioxide fixation, as well as the oxidative fragmentation of the pentose substrate in the photorespiration process. Both reactions occur simultaneously and in competition at the same active site. In Pinus pinea (Italian stone pine), this protein is Ribulose bisphosphate carboxylase large chain.